An 88-amino-acid chain; its full sequence is Long neurotoxin 31 (88 aa).

The first 21 residues, 1–21 (MKTLLLTLVVVTIVCLDLGNS), serve as a signal peptide directing secretion. Disulfide bonds link Cys24-Cys42, Cys35-Cys63, Cys48-Cys52, Cys67-Cys78, and Cys79-Cys84.

The protein belongs to the three-finger toxin family. Long-chain subfamily. Type II alpha-neurotoxin sub-subfamily. As to expression, expressed by the venom gland.

It is found in the secreted. Binds with high affinity to muscular (alpha-1/CHRNA1) and neuronal (alpha-7/CHRNA7) nicotinic acetylcholine receptor (nAChR) and inhibits acetylcholine from binding to the receptor, thereby impairing neuromuscular and neuronal transmission. The protein is Long neurotoxin 31 of Drysdalia coronoides (White-lipped snake).